Consider the following 179-residue polypeptide: ATP synthase subunit delta (179 aa).

This sequence belongs to the ATPase delta chain family. As to quaternary structure, F-type ATPases have 2 components, F(1) - the catalytic core - and F(0) - the membrane proton channel. F(1) has five subunits: alpha(3), beta(3), gamma(1), delta(1), epsilon(1). F(0) has three main subunits: a(1), b(2) and c(10-14). The alpha and beta chains form an alternating ring which encloses part of the gamma chain. F(1) is attached to F(0) by a central stalk formed by the gamma and epsilon chains, while a peripheral stalk is formed by the delta and b chains.

Its subcellular location is the cell inner membrane. In terms of biological role, f(1)F(0) ATP synthase produces ATP from ADP in the presence of a proton or sodium gradient. F-type ATPases consist of two structural domains, F(1) containing the extramembraneous catalytic core and F(0) containing the membrane proton channel, linked together by a central stalk and a peripheral stalk. During catalysis, ATP synthesis in the catalytic domain of F(1) is coupled via a rotary mechanism of the central stalk subunits to proton translocation. Functionally, this protein is part of the stalk that links CF(0) to CF(1). It either transmits conformational changes from CF(0) to CF(1) or is implicated in proton conduction. The protein is ATP synthase subunit delta of Anaeromyxobacter sp. (strain K).